We begin with the raw amino-acid sequence, 313 residues long: Olfactory receptor 1M1 (313 aa).

At 1–25 (MEPQNHTSASEFILLGLSEKPDHDP) the chain is on the extracellular side. N-linked (GlcNAc...) asparagine glycosylation is present at N5. The helical transmembrane segment at 26–46 (VLFSLFLCMYMITVVGNLLII) threads the bilayer. Over 47–54 (LAISFDSH) the chain is Cytoplasmic. Residues 55-75 (LHTPMYFFLANLSLVDFCLAT) form a helical membrane-spanning segment. The Extracellular segment spans residues 76 to 97 (NTVPKMLVNIQTRNKSISYPCC). A glycan (N-linked (GlcNAc...) asparagine) is linked at N89. A disulfide bridge connects residues C97 and C179. A helical transmembrane segment spans residues 98–118 (LTQMYFFHFFGIMDSVLIAVM). The Cytoplasmic segment spans residues 119–142 (AYDRFVAICHPLHYSTIMSPRLCG). The chain crosses the membrane as a helical span at residues 143–163 (LLVGVPWVYSCFISLTHILLM). The Extracellular segment spans residues 164–196 (ARLVFCGKNELPHYFCDLTPLLRLSCTDTTVNK). The helical transmembrane segment at 197–217 (IFVLIVAGMVIATPFVCILAS) threads the bilayer. The Cytoplasmic portion of the chain corresponds to 218–244 (YARIIVAIMKVPSAGGRKKAFSTCSSH). A helical transmembrane segment spans residues 245-265 (LSVVALFYGTTIGVYLCPSSV). Residues 266-274 (RTAVKEKAS) are Extracellular-facing. The chain crosses the membrane as a helical span at residues 275-292 (AVMYTAVTPMLNPFIYSL). At 293–313 (RNRDLKGALKKIINRKISTSS) the chain is on the cytoplasmic side.

This sequence belongs to the G-protein coupled receptor 1 family. Expressed in testis.

The protein resides in the cell membrane. Its function is as follows. Odorant receptor. This chain is Olfactory receptor 1M1, found in Mus musculus (Mouse).